Reading from the N-terminus, the 254-residue chain is RING-H2 finger protein ATL28 (254 aa).

Residues 25 to 45 traverse the membrane as a helical segment; the sequence is VVLTGVLLFVIFAGFFSLFLW. The RING-type; atypical zinc-finger motif lies at 103–145; it reads CAICLSEFSDEDTVRLITVCRHPFHSNCIDLWFELHKTCPVCR.

This sequence belongs to the RING-type zinc finger family. ATL subfamily.

The protein localises to the membrane. The enzyme catalyses S-ubiquitinyl-[E2 ubiquitin-conjugating enzyme]-L-cysteine + [acceptor protein]-L-lysine = [E2 ubiquitin-conjugating enzyme]-L-cysteine + N(6)-ubiquitinyl-[acceptor protein]-L-lysine.. Its pathway is protein modification; protein ubiquitination. The sequence is that of RING-H2 finger protein ATL28 (ATL28) from Arabidopsis thaliana (Mouse-ear cress).